We begin with the raw amino-acid sequence, 452 residues long: Isocitrate dehydrogenase [NADP], mitochondrial (452 aa).

The N-terminal 39 residues, 1–39, are a transit peptide targeting the mitochondrion; the sequence is MAGYLRVVRSLCRASGSGSAWAPAALTAPNLQEQPRRHY. N6-acetyllysine occurs at positions 45, 48, 67, and 69. N6-acetyllysine; alternate occurs at positions 80 and 106. An N6-succinyllysine; alternate mark is found at lysine 80 and lysine 106. NADP(+)-binding positions include 115 to 117 and arginine 122; that span reads TIT. Threonine 117 lines the D-threo-isocitrate pocket. Residues 134–140 and arginine 149 contribute to the D-threo-isocitrate site; that span reads SPNGTIR. Position 155 is an N6-acetyllysine (lysine 155). An N6-acetyllysine; alternate modification is found at lysine 166. Position 166 is an N6-succinyllysine; alternate (lysine 166). Arginine 172 serves as a coordination point for D-threo-isocitrate. Lysine 180 and lysine 193 each carry N6-acetyllysine; alternate. 2 positions are modified to N6-succinyllysine; alternate: lysine 180 and lysine 193. An N6-acetyllysine modification is found at lysine 199. The residue at position 256 (lysine 256) is an N6-acetyllysine; alternate. The residue at position 256 (lysine 256) is an N6-succinyllysine; alternate. Residues lysine 263, lysine 272, lysine 275, and lysine 280 each carry the N6-acetyllysine modification. The residue at position 282 (lysine 282) is an N6-acetyllysine; alternate. An N6-succinyllysine; alternate modification is found at lysine 282. Aspartate 291 contributes to the Mn(2+) binding site. NADP(+) is bound at residue lysine 299. Residue aspartate 314 participates in Mn(2+) binding. NADP(+) is bound by residues 349–354 and asparagine 367; that span reads GTVTRH. Position 384 is an N6-acetyllysine; alternate (lysine 384). Lysine 384 is subject to N6-succinyllysine; alternate. Lysine 400, lysine 413, and lysine 442 each carry N6-acetyllysine.

Belongs to the isocitrate and isopropylmalate dehydrogenases family. As to quaternary structure, homodimer. Mg(2+) is required as a cofactor. Requires Mn(2+) as cofactor. Post-translationally, acetylation at Lys-413 dramatically reduces catalytic activity. Deacetylated by SIRT3.

It is found in the mitochondrion. It catalyses the reaction D-threo-isocitrate + NADP(+) = 2-oxoglutarate + CO2 + NADPH. In terms of biological role, plays a role in intermediary metabolism and energy production. It may tightly associate or interact with the pyruvate dehydrogenase complex. The chain is Isocitrate dehydrogenase [NADP], mitochondrial (IDH2) from Bos taurus (Bovine).